The chain runs to 878 residues: Lon protease 2 (878 aa).

Residues Leu-85–Ile-281 form the Lon N-terminal domain. Gly-434 to Thr-441 provides a ligand contact to ATP. Residues Asn-668–Ile-850 enclose the Lon proteolytic domain. Residues Ser-756 and Lys-799 contribute to the active site.

The protein belongs to the peptidase S16 family. In terms of assembly, homohexamer. Organized in a ring with a central cavity.

The protein localises to the cytoplasm. It catalyses the reaction Hydrolysis of proteins in presence of ATP.. Functionally, ATP-dependent serine protease that mediates the selective degradation of mutant and abnormal proteins as well as certain short-lived regulatory proteins. Required for cellular homeostasis and for survival from DNA damage and developmental changes induced by stress. Degrades polypeptides processively to yield small peptide fragments that are 5 to 10 amino acids long. Binds to DNA in a double-stranded, site-specific manner. This is Lon protease 2 from Hydrogenovibrio crunogenus (strain DSM 25203 / XCL-2) (Thiomicrospira crunogena).